We begin with the raw amino-acid sequence, 205 residues long: Ribosomal RNA large subunit methyltransferase E (205 aa).

5 residues coordinate S-adenosyl-L-methionine: Gly-60, Trp-62, Asp-80, Asp-96, and Asp-121. Lys-161 functions as the Proton acceptor in the catalytic mechanism.

The protein belongs to the class I-like SAM-binding methyltransferase superfamily. RNA methyltransferase RlmE family.

The protein resides in the cytoplasm. The catalysed reaction is uridine(2552) in 23S rRNA + S-adenosyl-L-methionine = 2'-O-methyluridine(2552) in 23S rRNA + S-adenosyl-L-homocysteine + H(+). Its function is as follows. Specifically methylates the uridine in position 2552 of 23S rRNA at the 2'-O position of the ribose in the fully assembled 50S ribosomal subunit. In Dechloromonas aromatica (strain RCB), this protein is Ribosomal RNA large subunit methyltransferase E.